We begin with the raw amino-acid sequence, 156 residues long: Transcription antitermination protein NusB (156 aa).

Belongs to the NusB family.

Involved in transcription antitermination. Required for transcription of ribosomal RNA (rRNA) genes. Binds specifically to the boxA antiterminator sequence of the ribosomal RNA (rrn) operons. The chain is Transcription antitermination protein NusB from Mycobacterium tuberculosis (strain CDC 1551 / Oshkosh).